A 1065-amino-acid chain; its full sequence is Alpha-L-arabinofuranosidase (1065 aa).

The N-terminal stretch at 1–26 is a signal peptide; the sequence is MKHWKKMAASLIAISTMVAVVPTTYA. The 70-residue stretch at 277–346 folds into the BIG2 domain; sequence VVNNKLTLIE…TTELGGVKAE (70 aa). Residues 997–1031 are disordered; sequence KAPTNPGEGDGDKGDGNKPTTPTTGDKTNVNKPGS. A compositionally biased stretch (polar residues) spans 1014–1031; the sequence is KPTTPTTGDKTNVNKPGS. The helical transmembrane segment at 1040 to 1060 threads the bilayer; that stretch reads VLGLGGAVVALAIAGISLTLW.

The protein belongs to the glycosyl hydrolase 43 family.

It is found in the cell membrane. It carries out the reaction Hydrolysis of terminal non-reducing alpha-L-arabinofuranoside residues in alpha-L-arabinosides.. Functionally, involved in the type II arabinogalactan (AG) side chains degradation. Releases arabinofuranose (Araf) from alpha-1,3-Araf-substituted beta-1,6-galactooligosaccharides. Can use radish root AGP, larch AG and arabinan. Shows weaker activity with gum arabic and arabinoxylan. This chain is Alpha-L-arabinofuranosidase, found in Bifidobacterium longum subsp. longum (strain ATCC 15707 / DSM 20219 / JCM 1217 / NCTC 11818 / E194b).